The sequence spans 705 residues: Polyphosphate kinase (705 aa).

Position 58 (Asn58) interacts with ATP. The Mg(2+) site is built by Arg389 and Arg419. The Phosphohistidine intermediate role is filled by His449. Residues Tyr482, Arg578, and His606 each coordinate ATP.

The protein belongs to the polyphosphate kinase 1 (PPK1) family. Mg(2+) serves as cofactor. An intermediate of this reaction is the autophosphorylated ppk in which a phosphate is covalently linked to a histidine residue through a N-P bond.

The catalysed reaction is [phosphate](n) + ATP = [phosphate](n+1) + ADP. Functionally, catalyzes the reversible transfer of the terminal phosphate of ATP to form a long-chain polyphosphate (polyP). The sequence is that of Polyphosphate kinase from Halalkalibacterium halodurans (strain ATCC BAA-125 / DSM 18197 / FERM 7344 / JCM 9153 / C-125) (Bacillus halodurans).